We begin with the raw amino-acid sequence, 332 residues long: uncharacterized protein (332 aa).

Residues 27-47 traverse the membrane as a helical segment; that stretch reads CAIVFLCVLLILPFLSCCTSL.

Its subcellular location is the membrane. This is an uncharacterized protein from Treponema pallidum (strain Nichols).